A 124-amino-acid chain; its full sequence is Large ribosomal subunit protein uL18 (124 aa).

Belongs to the universal ribosomal protein uL18 family. As to quaternary structure, part of the 50S ribosomal subunit; part of the 5S rRNA/L5/L18/L25 subcomplex. Contacts the 5S and 23S rRNAs.

In terms of biological role, this is one of the proteins that bind and probably mediate the attachment of the 5S RNA into the large ribosomal subunit, where it forms part of the central protuberance. The protein is Large ribosomal subunit protein uL18 of Parafrankia sp. (strain EAN1pec).